The sequence spans 234 residues: Transcription factor bHLH160 (234 aa).

A compositionally biased stretch (polar residues) spans 1–13; that stretch reads MSSQPNHQTSISS. The tract at residues 1–67 is disordered; sequence MSSQPNHQTS…GAAKKQDHNA (67 aa). A compositionally biased stretch (basic and acidic residues) spans 27-37; the sequence is IVEKESAEKDT. The bHLH domain occupies 60-115; it reads AKKQDHNAKERLRRMRLHASYLTLGTLLPDHSSSSSKKKWSAPSIIDNVITYIPKL.

The protein belongs to the bHLH protein family.

The protein localises to the nucleus. This chain is Transcription factor bHLH160, found in Arabidopsis thaliana (Mouse-ear cress).